The following is a 286-amino-acid chain: Ribosomal RNA small subunit methyltransferase H (286 aa).

S-adenosyl-L-methionine contacts are provided by residues 17 to 19 (AGH), D36, F63, D84, and Q91.

It belongs to the methyltransferase superfamily. RsmH family.

Its subcellular location is the cytoplasm. The enzyme catalyses cytidine(1402) in 16S rRNA + S-adenosyl-L-methionine = N(4)-methylcytidine(1402) in 16S rRNA + S-adenosyl-L-homocysteine + H(+). Functionally, specifically methylates the N4 position of cytidine in position 1402 (C1402) of 16S rRNA. This chain is Ribosomal RNA small subunit methyltransferase H, found in Metamycoplasma arthritidis (strain 158L3-1) (Mycoplasma arthritidis).